We begin with the raw amino-acid sequence, 233 residues long: Protein lin-7 homolog A (233 aa).

The Kinase interacting site signature appears at 14 to 28; that stretch reads MATLTVVQPLTLDRD. An L27 domain is found at 25–80; sequence LDRDVARAIELLEKLQESGEVPVHKLQSLKKVLQSEFCTAIREVYQYMHETITVNG. The region spanning 108 to 190 is the PDZ domain; sequence VVELPKTDEG…SVKLVVRYTP (83 aa). Residues 214 to 233 are disordered; sequence LLIQQQQQQQQQQPQQNHMS.

The protein belongs to the lin-7 family. As to quaternary structure, forms a complex with CASK and CASKIN1. Component of the brain-specific heterotrimeric complex (LIN-10-LIN-2-LIN-7 complex) composed of at least APBA1, CASK, and LIN7, which associates with the motor protein KIF17 to transport vesicles along microtubules. Can also interact with other modular proteins containing protein-protein interaction domains like PALS1, PALS2, MPP7, DLG1, DLG2 and DLG3 through its L27 domain. Interacts with DLG4, GRIN2B and MARCHF11 as well as CDH1 and CTNNB1, the channels KCNJ12/Kir2.2, KCNJ4/Kir2.3 and probably KCNJ2/Kir2.1 and SLC6A12/BGT-1 via its PDZ domain. The association of LIN7A with cadherin and beta-catenin is calcium-dependent, occurs at synaptic junctions and requires the actin cytoskeleton. Interacts with EGFR, ERBB2, ERBB3 and ERBB4 with both PDZ and KID domains. Associates with KIF17 via APBA1. Interacts with HTR4. Forms a tripartite complex composed of DLG1, MPP7 and LIN7 (LIN7A or LIN7C). In terms of tissue distribution, expressed in the kidney, along the length of the nephron.

Its subcellular location is the cell membrane. It localises to the basolateral cell membrane. The protein resides in the cell junction. The protein localises to the postsynaptic density membrane. It is found in the tight junction. Functionally, plays a role in establishing and maintaining the asymmetric distribution of channels and receptors at the plasma membrane of polarized cells. Forms membrane-associated multiprotein complexes that may regulate delivery and recycling of proteins to the correct membrane domains. The tripartite complex composed of LIN7 (LIN7A, LIN7B or LIN7C), CASK and APBA1 associates with the motor protein KIF17 to transport vesicles containing N-methyl-D-aspartate (NMDA) receptor subunit NR2B along microtubules. This complex may have the potential to couple synaptic vesicle exocytosis to cell adhesion in brain. Ensures the proper localization of GRIN2B (subunit 2B of the NMDA receptor) to neuronal postsynaptic density and may function in localizing synaptic vesicles at synapses where it is recruited by beta-catenin and cadherin. Required to localize Kir2 channels, GABA transporter (SLC6A12) and EGFR/ERBB1, ERBB2, ERBB3 and ERBB4 to the basolateral membrane of epithelial cells. This Mus musculus (Mouse) protein is Protein lin-7 homolog A (Lin7a).